The chain runs to 132 residues: Small ribosomal subunit protein uS8 (132 aa).

This sequence belongs to the universal ribosomal protein uS8 family. Part of the 30S ribosomal subunit. Contacts proteins S5 and S12.

Functionally, one of the primary rRNA binding proteins, it binds directly to 16S rRNA central domain where it helps coordinate assembly of the platform of the 30S subunit. The protein is Small ribosomal subunit protein uS8 of Bacillus licheniformis (strain ATCC 14580 / DSM 13 / JCM 2505 / CCUG 7422 / NBRC 12200 / NCIMB 9375 / NCTC 10341 / NRRL NRS-1264 / Gibson 46).